Here is a 711-residue protein sequence, read N- to C-terminus: Protein Smaug homolog 1 (711 aa).

S168 carries the phosphoserine modification. Positions 278–323 (ARGPQCLPSDHAPLSPQSSVASSGSGGSEHLEDQTTARNTFQEEGS) are disordered. In terms of domain architecture, SAM spans 323–396 (SGMKDVPAWL…LKSLERDIIE (74 aa)). The residue at position 420 (S420) is a Phosphoserine. Disordered regions lie at residues 422-448 (STTP…SAAA) and 565-588 (NRGF…GRRN). Phosphothreonine is present on T424. R566 carries the post-translational modification Omega-N-methylarginine. Residues 568–581 (FGQSNSLPTASSVG) show a composition bias toward polar residues. S573 carries the phosphoserine modification.

Belongs to the SMAUG family. In terms of tissue distribution, expressed in brain (at protein level).

It localises to the cytoplasm. The protein localises to the cell projection. It is found in the dendrite. Its subcellular location is the synapse. The protein resides in the synaptosome. Its function is as follows. Acts as a translational repressor of SRE-containing messengers. This Mus musculus (Mouse) protein is Protein Smaug homolog 1 (Samd4a).